The primary structure comprises 341 residues: Heme A synthase (341 aa).

The next 8 helical transmembrane spans lie at 7–27 (VTVW…IGGI), 92–112 (LFGR…AITK), 118–138 (MVAK…MGWF), 159–179 (LFLT…CAGV), 190–210 (FFTA…GALV), 253–273 (FLHR…PFWL), 280–300 (LFLA…VSVV), and 302–322 (IFLA…GVHM). Residue His-255 participates in heme binding. His-308 is a heme binding site.

It belongs to the COX15/CtaA family. Type 2 subfamily. As to quaternary structure, interacts with CtaB. The cofactor is heme b.

Its subcellular location is the cell membrane. It carries out the reaction Fe(II)-heme o + 2 A + H2O = Fe(II)-heme a + 2 AH2. Its pathway is porphyrin-containing compound metabolism; heme A biosynthesis; heme A from heme O: step 1/1. Its function is as follows. Catalyzes the conversion of heme O to heme A by two successive hydroxylations of the methyl group at C8. The first hydroxylation forms heme I, the second hydroxylation results in an unstable dihydroxymethyl group, which spontaneously dehydrates, resulting in the formyl group of heme A. The polypeptide is Heme A synthase (Anaplasma marginale (strain Florida)).